The sequence spans 236 residues: MGQKINPIGLRLGINRTWDSRWFAGKAEYGKLLHEDVKIREILHKELKQAAVARIVIERPHKKCRVTIHSARPGVVIGKKGADIDKLRKRVADITSSDVVINIVEIRKPELDATLVAESIAQQLERRVAFRRAMKRAVQSAMRLGAEGIRINCSGRLGGAEIARMEWYREGRVPLHTLRADIDYGVATAFTTFGTCGVKVWIFKGEILEHDPMAQDKRMNEGGGESSQPRSRRDAA.

Residues 39–107 (IREILHKELK…DVVINIVEIR (69 aa)) form the KH type-2 domain. The interval 213–236 (MAQDKRMNEGGGESSQPRSRRDAA) is disordered.

This sequence belongs to the universal ribosomal protein uS3 family. Part of the 30S ribosomal subunit. Forms a tight complex with proteins S10 and S14.

In terms of biological role, binds the lower part of the 30S subunit head. Binds mRNA in the 70S ribosome, positioning it for translation. This is Small ribosomal subunit protein uS3 from Bradyrhizobium sp. (strain BTAi1 / ATCC BAA-1182).